The primary structure comprises 203 residues: Small ribosomal subunit protein uS4 (203 aa).

Positions arginine 93 to serine 153 constitute an S4 RNA-binding domain.

It belongs to the universal ribosomal protein uS4 family. Part of the 30S ribosomal subunit. Contacts protein S5. The interaction surface between S4 and S5 is involved in control of translational fidelity.

In terms of biological role, one of the primary rRNA binding proteins, it binds directly to 16S rRNA where it nucleates assembly of the body of the 30S subunit. Functionally, with S5 and S12 plays an important role in translational accuracy. This chain is Small ribosomal subunit protein uS4, found in Chlorobium phaeovibrioides (strain DSM 265 / 1930) (Prosthecochloris vibrioformis (strain DSM 265)).